Reading from the N-terminus, the 133-residue chain is Transcription antitermination protein NusB (133 aa).

The protein belongs to the NusB family.

Involved in transcription antitermination. Required for transcription of ribosomal RNA (rRNA) genes. Binds specifically to the boxA antiterminator sequence of the ribosomal RNA (rrn) operons. This chain is Transcription antitermination protein NusB, found in Pediococcus pentosaceus (strain ATCC 25745 / CCUG 21536 / LMG 10740 / 183-1w).